Consider the following 239-residue polypeptide: Phosphoglycolate phosphatase (239 aa).

Residue Asp14 is the Nucleophile of the active site. Residues Asp14 and Asp16 each coordinate Mg(2+). Lys160 is a substrate binding site. Residues Asp183 and Asp187 each coordinate Mg(2+).

The protein belongs to the archaeal SPP-like hydrolase family. It depends on Mg(2+) as a cofactor.

It catalyses the reaction 2-phosphoglycolate + H2O = glycolate + phosphate. In terms of biological role, catalyzes the dephosphorylation of 2-phosphoglycolate. This is Phosphoglycolate phosphatase from Aeropyrum pernix (strain ATCC 700893 / DSM 11879 / JCM 9820 / NBRC 100138 / K1).